We begin with the raw amino-acid sequence, 473 residues long: MASRSLGGLSGIRGGGGGGGKKSLSARNAAVERRNLITVCRFSVKTLIDRSCFETIDDSSPEFNNFAAILEQILSHRLKEISQSCRWLAHLQIPLQGQVTWFGYESPRSFWDYIRVACRKVSQNCICSIENMENVSSSRAKGRAWIRVALMEKHLSEYISTALRDFKTTRRFYEDGAIVLGEEANMLAGMLLGLNAIDFSFCLKGEGLDGSFPAVIDYTPYLKYIQSSDSISSDEEELRTLGSSGSESSTPENVGPPFLMDENSWFNKCKRVKQKYQLTLEQKGYLEELLRLRENQLSESVSQNKILLQRIEDSDLAHKLEKEQLEYIIVELQDQLTVLKNNDLRSRQELTAHLTNQWPSPGALDVNAVALDTLLYRKHNKQWYEKSYQSLDQLSAEVSLSQTSLDPGQSQEGDGKQDTLNVMSEGKEDTPSLLGLCGSLTSVASYKSLTSLKSNDYLASPTTEMTSPGLTPS.

Residues 1–24 are disordered; the sequence is MASRSLGGLSGIRGGGGGGGKKSL. Gly residues predominate over residues 8–21; it reads GLSGIRGGGGGGGK. Arginine 13 is subject to Omega-N-methylarginine. Positions 57-206 constitute an RUN domain; it reads DDSSPEFNNF…IDFSFCLKGE (150 aa). A phosphoserine mark is found at serine 232 and serine 233. Residues 317–342 are a coiled coil; the sequence is AHKLEKEQLEYIIVELQDQLTVLKNN. Polar residues predominate over residues 399–422; the sequence is SLSQTSLDPGQSQEGDGKQDTLNV. The disordered stretch occupies residues 399-428; that stretch reads SLSQTSLDPGQSQEGDGKQDTLNVMSEGKE.

The protein belongs to the RUNDC3 family. In terms of assembly, interacts with RAP2A. As to expression, isoform 2 is expressed at high levels in brain, thymus, ovary, testis, leukocyte, liver, small intestine and prostate. Isoform 1 is expressed in the brain, testis and adrenal gland. It is activated in tumorigenic breast cancer cell lines and in the primary tumor of breast cancer patients. Activation also correlates with metastatic lymph node invasion and can be detected in metastatic epithelial cells from the lymph nodes and in the bone marrow of patients.

This is RUN domain-containing protein 3B (RUNDC3B) from Homo sapiens (Human).